Reading from the N-terminus, the 480-residue chain is 3-isopropylmalate dehydratase large subunit (480 aa).

Residues cysteine 357, cysteine 417, and cysteine 420 each contribute to the [4Fe-4S] cluster site. Polar residues predominate over residues 431-441 (GQRCASTSNRN). The segment at 431-454 (GQRCASTSNRNFEGRQGKGGRTHL) is disordered.

Belongs to the aconitase/IPM isomerase family. LeuC type 1 subfamily. In terms of assembly, heterodimer of LeuC and LeuD. The cofactor is [4Fe-4S] cluster.

It catalyses the reaction (2R,3S)-3-isopropylmalate = (2S)-2-isopropylmalate. It functions in the pathway amino-acid biosynthesis; L-leucine biosynthesis; L-leucine from 3-methyl-2-oxobutanoate: step 2/4. In terms of biological role, catalyzes the isomerization between 2-isopropylmalate and 3-isopropylmalate, via the formation of 2-isopropylmaleate. In Mycobacteroides abscessus (strain ATCC 19977 / DSM 44196 / CCUG 20993 / CIP 104536 / JCM 13569 / NCTC 13031 / TMC 1543 / L948) (Mycobacterium abscessus), this protein is 3-isopropylmalate dehydratase large subunit.